The sequence spans 336 residues: Homoserine O-acetyltransferase (336 aa).

An AB hydrolase-1 domain is found at 58 to 321 (AILVLHALTG…PHGHDAFLID (264 aa)). The active-site Nucleophile is serine 147. Arginine 204 lines the substrate pocket. Catalysis depends on residues aspartate 286 and histidine 315. Position 316 (aspartate 316) interacts with substrate.

This sequence belongs to the AB hydrolase superfamily. MetX family. Homodimer.

The protein localises to the cytoplasm. The catalysed reaction is L-homoserine + acetyl-CoA = O-acetyl-L-homoserine + CoA. It participates in amino-acid biosynthesis; L-methionine biosynthesis via de novo pathway; O-acetyl-L-homoserine from L-homoserine: step 1/1. Its function is as follows. Transfers an acetyl group from acetyl-CoA to L-homoserine, forming acetyl-L-homoserine. This chain is Homoserine O-acetyltransferase, found in Deinococcus geothermalis (strain DSM 11300 / CIP 105573 / AG-3a).